The primary structure comprises 368 residues: Protein mab-21-like (368 aa).

Belongs to the mab-21 family.

This Drosophila pseudoobscura pseudoobscura (Fruit fly) protein is Protein mab-21-like.